The following is a 60-amino-acid chain: Protein MGF 360-5L (60 aa).

Belongs to the asfivirus MGF 360 family.

Its function is as follows. Plays a role in virus cell tropism, and may be required for efficient virus replication in macrophages. The sequence is that of Protein MGF 360-5L from Ornithodoros (relapsing fever ticks).